Reading from the N-terminus, the 233-residue chain is MADNKAKKEQVHDVFQNISGKYDRLNNIISFEQHKTWRKRVMKEMNVKSGSKALDVCCGTADWTISLSKAVGHTGEVIGVDFSENMLEVGKRKTKDMHNIQLVHGDAMNLPFEDNEFDYVTIGFGLRNVPDYLATLKELNRVLKPGGMIVCLETSQPTTPVFKQCYKLYFKFVMPIFGKIFAKSKDEYEWLQQSTFNFPDKEKLKRLFNQAGFSNVKVRSFTGGVAAMHLGYK.

Residues threonine 60, aspartate 81, and 106–107 contribute to the S-adenosyl-L-methionine site; that span reads DA.

It belongs to the class I-like SAM-binding methyltransferase superfamily. MenG/UbiE family.

The catalysed reaction is a 2-demethylmenaquinol + S-adenosyl-L-methionine = a menaquinol + S-adenosyl-L-homocysteine + H(+). It participates in quinol/quinone metabolism; menaquinone biosynthesis; menaquinol from 1,4-dihydroxy-2-naphthoate: step 2/2. Its function is as follows. Methyltransferase required for the conversion of demethylmenaquinol (DMKH2) to menaquinol (MKH2). The polypeptide is Demethylmenaquinone methyltransferase (Staphylococcus saprophyticus subsp. saprophyticus (strain ATCC 15305 / DSM 20229 / NCIMB 8711 / NCTC 7292 / S-41)).